The following is a 100-amino-acid chain: Small ribosomal subunit protein uS14 (100 aa).

This sequence belongs to the universal ribosomal protein uS14 family. Part of the 30S ribosomal subunit. Contacts proteins S3 and S10.

Its function is as follows. Binds 16S rRNA, required for the assembly of 30S particles and may also be responsible for determining the conformation of the 16S rRNA at the A site. This Prochlorococcus marinus (strain MIT 9301) protein is Small ribosomal subunit protein uS14.